The primary structure comprises 66 residues: Large ribosomal subunit protein bL35 (66 aa).

A compositionally biased stretch (basic residues) spans M1 to R26. The tract at residues M1 to L49 is disordered.

Belongs to the bacterial ribosomal protein bL35 family.

The chain is Large ribosomal subunit protein bL35 from Staphylococcus carnosus (strain TM300).